Reading from the N-terminus, the 294-residue chain is Sperm acrosome membrane-associated protein 1 (294 aa).

Residues 1 to 29 (MSPRGTGCSAGLLMTVGWLLLAGLQSARG) form the signal peptide. The Extracellular portion of the chain corresponds to 30 to 221 (TNVTAAVQDA…LPATDAALIF (192 aa)). N-linked (GlcNAc...) asparagine glycosylation occurs at Asn31. Residues 42–70 (AHEGEGEEETENNDSETAENYAPPETEDV) are disordered. The span at 46-58 (EGEEETENNDSET) shows a compositional bias: acidic residues. The chain crosses the membrane as a helical span at residues 222 to 242 (VLTIGVIICVFIIFLLIFIII). The Cytoplasmic portion of the chain corresponds to 243-294 (NWAAVKAFWGAKASTPEVQSEQSSVRYKDSTSLDQLPTEMPGEDDALSEWNE). A Phosphoserine modification is found at Ser256. Over residues 258–267 (PEVQSEQSSV) the composition is skewed to polar residues. Residues 258 to 294 (PEVQSEQSSVRYKDSTSLDQLPTEMPGEDDALSEWNE) form a disordered region. Tyr269 is subject to Phosphotyrosine. Positions 283-294 (PGEDDALSEWNE) are enriched in acidic residues. Ser290 bears the Phosphoserine mark.

As to quaternary structure, interacts with CYLC1; the interaction may be relevant for proper acrosome attachment to the nuclear envelope. N-glycosylated. As to expression, testis specific.

The protein localises to the cytoplasmic vesicle. It is found in the secretory vesicle. Its subcellular location is the acrosome inner membrane. In terms of biological role, plays a role in acrosome formation and establishment of normal sperm morphology during spermatogenesis. Important for male fertility. This Homo sapiens (Human) protein is Sperm acrosome membrane-associated protein 1 (SPACA1).